A 723-amino-acid chain; its full sequence is MLSSMVAAGSVKAALQVAEVLEAIVSCCVGPEGRQVLCTKPTGEVLLSRNGGRLLEALHLEHPIARMIVDCVSSHLKKTGDGAKTFIIFLCHLLRGLHAITDSEKDPLMCENIQTHGRHWKNCSQWKCISQALLTFQTQILDGIMDQYLSRHFLSIFSSAKEKTLCRSSLELLLEAYFCGRVGRNNHKFISQLMCDYFFKCMTCESGIGVFELVDDYFVELNVGVTGLPVSDSRIIAGLVLQKDFSVYCPADGDIRMVIVTETVQPLFSTSGSEFILNSEAQFQTSQFWIMEKTQAIMKHLHSQNVKLLISSVKQPDLVIYYAGVNGISVVECLSSEEVSLIRRIIGLSPFVPPQAFSQCEIPNTALVKFCKPLILRSKRYVHLGLISTCAFIPHSIVLCGPLQGLIEQHEDALHGAFKMLRQLFKDLDLSYITQTNDQNGTSSLFIYKNSGESYQAPDTGNGSIQRPYQDTVVENKDELEKTQTYLKVHSNLVISDVELETYIPYSTPTLTPTDTFQTVETLTCLSLERNRLTDYYEPLLKNNSTAYSTRGNRIEISYENLQVTNITGKGSMLPVSCKLQNMGTSQSYLSSSMPAGCVLPVGGNFEILLHYYLLNYAKKCHQPEETMVSMIIANALLGIPKVLYKSKTGKYSFPHTYIRAVHALQTNQPLVSSQTGLESVTGKYQLLTSVLQCLTKILTIDVVITVKRDPQKVHNQDSEDEL.

The protein belongs to the TCP-1 chaperonin family. In terms of assembly, component of a complex composed at least of MKKS, BBS10, BBS12, TCP1, CCT2, CCT3, CCT4, CCT5 and CCT8.

Its subcellular location is the cell projection. The protein resides in the cilium. In terms of biological role, probable molecular chaperone that assists the folding of proteins upon ATP hydrolysis. Plays a role in the assembly of BBSome, a complex involved in ciliogenesis regulating transports vesicles to the cilia. Involved in adipogenic differentiation. This chain is BBSome complex assembly protein BBS10 (BBS10), found in Pongo abelii (Sumatran orangutan).